The sequence spans 183 residues: Phospholipase A2 inhibitor gamma subunit A1 (183 aa).

Cystine bridges form between C3/C28, C6/C13, C21/C49, C55/C76, C77/C82, C100/C125, C118/C147, and C151/C173. A glycan (N-linked (GlcNAc...) asparagine) is linked at N158.

This sequence belongs to the CNF-like-inhibitor family. As to quaternary structure, heterodimer of subunit A and subunit B. As to expression, expressed by the liver.

The protein resides in the secreted. Phospholipase A2 (PA2) inhibitor. Inhibits the enzymatic activity of PA2 of Deinagkistrodon acutus. Also shows a wide anti-hemorrhage activities to D.acutus, Naja atra and Agkistrodon halys venom. The native protein is more potent than the recombinant one. This chain is Phospholipase A2 inhibitor gamma subunit A1, found in Trimerodytes annularis (Red-bellied annulate keelback).